Consider the following 833-residue polypeptide: ERAD-associated E3 ubiquitin-protein ligase component HRD3 (833 aa).

The N-terminal stretch at 1–20 is a signal peptide; the sequence is MITLLLYLCVICNAIVLIRA. 3 N-linked (GlcNAc...) asparagine glycosylation sites follow: asparagine 101, asparagine 123, and asparagine 142. The Sel1-like 1 repeat unit spans residues 103–139; that stretch reads SEATYTLSQIHLWSQYNFPHNMTLAHKYLEKFNDLTH. Sel1-like repeat units lie at residues 143 to 186, 187 to 222, 413 to 445, 552 to 595, 596 to 627, and 628 to 663; these read HSAI…QLGN, LKAK…EQLR, GRAC…KTQA, ETAQ…KQGN, IDAG…LKYS, and IQAI…EHDH. N-linked (GlcNAc...) asparagine glycosylation occurs at asparagine 429. N-linked (GlcNAc...) asparagine glycosylation is present at asparagine 611. A helical transmembrane segment spans residues 768–788; sequence LVTMGCILGIFLLSILMSTLA. The segment at 805–824 is disordered; it reads NGNRQQEQQQQQQAQGPPGW. Low complexity predominate over residues 809 to 819; the sequence is QQEQQQQQQAQ.

Belongs to the sel-1 family. Component of the HRD1 ubiquitin ligase complex which contains the E3 ligase HRD1, its cofactors HRD3, USA1 and DER1, substrate recruiting factor YOS9 and CDC48-binding protein UBX2. Within the complex, interacts directly with HRD1 and YOS9 (via N-terminus). In ERAD-L, HRD3 and YOS9 jointly bind misfolded glycoproteins in the endoplasmic reticulum (ER) lumen. Movement of ERAD-L substrates through the ER membrane is facilitated by HRD1 and DER1 which have lateral gates facing each other and which distort the membrane region between the lateral gates, making it much thinner than a normal phospholipid bilayer. Substrates insert into the membrane as a hairpin loop with one strand interacting with DER1 and the other with HRD1. The HRD1 complex interacts with the heterotrimeric CDC48-NPL4-UFD1 ATPase complex which is recruited by UBX2 via its interaction with CDC48 and which moves ubiquitinated substrates to the cytosol for targeting to the proteasome. The HRD1 complex interacts with the ERAD substrates HMG1 and HMG2. Interacts with KAR2.

Its subcellular location is the endoplasmic reticulum membrane. Functionally, component of the endoplasmic reticulum quality control (ERQC) system involved in ubiquitin-dependent degradation of misfolded endoplasmic reticulum proteins. Component of the HRD1 ubiquitin ligase complex, which is part of the ERAD-L and ERAD-M pathways responsible for the rapid degradation of soluble lumenal and membrane proteins with misfolded lumenal domains (ERAD-L), or ER-membrane proteins with misfolded transmembrane domains (ERAD-M). ERAD-L substrates are ubiquitinated through HRD1 in conjunction with the E2 ubiquitin-conjugating enzymes UBC1 and UBC7-CUE1. Ubiquitinated substrates are then removed to the cytosol via the action of the CDC48-NPL4-UFD1 ATPase complex and targeted to the proteasome. ERAD-M substrates are processed by the same HRD1-HRD3 core complex, but only a subset of the other components is required for ERAD-M. Stabilizes the HRD1 ubiquitin-protein ligase. Also functions in recruiting misfolded protein substrates in conjunction with YOS9. The protein is ERAD-associated E3 ubiquitin-protein ligase component HRD3 (HRD3) of Saccharomyces cerevisiae (strain ATCC 204508 / S288c) (Baker's yeast).